The primary structure comprises 196 residues: Acyl-homoserine-lactone synthase (196 aa).

It belongs to the autoinducer synthase family.

The enzyme catalyses a fatty acyl-[ACP] + S-adenosyl-L-methionine = an N-acyl-L-homoserine lactone + S-methyl-5'-thioadenosine + holo-[ACP] + H(+). Functionally, required for the synthesis of a yet unknown N-aceyl-homoserine lactone (N-aceyl-HSL), an autoinducer molecule which binds to PhzR and thus regulates phenazine production. This is Acyl-homoserine-lactone synthase (phzI) from Pseudomonas fluorescens.